We begin with the raw amino-acid sequence, 84 residues long: Translation initiation factor IF-1, chloroplastic (84 aa).

An S1-like domain is found at 1-72 (MKKQNLVEME…SKGRITYRLR (72 aa)).

This sequence belongs to the IF-1 family. As to quaternary structure, component of the 30S ribosomal translation pre-initiation complex which assembles on the 30S ribosome in the order IF-2 and IF-3, IF-1 and N-formylmethionyl-tRNA(fMet); mRNA recruitment can occur at any time during PIC assembly.

The protein localises to the plastid. The protein resides in the chloroplast. One of the essential components for the initiation of protein synthesis. Stabilizes the binding of IF-2 and IF-3 on the 30S subunit to which N-formylmethionyl-tRNA(fMet) subsequently binds. Helps modulate mRNA selection, yielding the 30S pre-initiation complex (PIC). Upon addition of the 50S ribosomal subunit IF-1, IF-2 and IF-3 are released leaving the mature 70S translation initiation complex. In Spirogyra maxima (Green alga), this protein is Translation initiation factor IF-1, chloroplastic.